Here is a 491-residue protein sequence, read N- to C-terminus: Proline--tRNA ligase (491 aa).

The protein belongs to the class-II aminoacyl-tRNA synthetase family. ProS type 3 subfamily. As to quaternary structure, homodimer.

The protein resides in the cytoplasm. The catalysed reaction is tRNA(Pro) + L-proline + ATP = L-prolyl-tRNA(Pro) + AMP + diphosphate. Its function is as follows. Catalyzes the attachment of proline to tRNA(Pro) in a two-step reaction: proline is first activated by ATP to form Pro-AMP and then transferred to the acceptor end of tRNA(Pro). The chain is Proline--tRNA ligase from Cytophaga hutchinsonii (strain ATCC 33406 / DSM 1761 / CIP 103989 / NBRC 15051 / NCIMB 9469 / D465).